The sequence spans 705 residues: Elongation factor G (705 aa).

In terms of domain architecture, tr-type G spans 8–290 (HRYRNIGIMA…GVIHLLPSPA (283 aa)). GTP is bound by residues 17–24 (AHIDAGKT), 88–92 (DTPGH), and 142–145 (NKMD).

It belongs to the TRAFAC class translation factor GTPase superfamily. Classic translation factor GTPase family. EF-G/EF-2 subfamily.

The protein resides in the cytoplasm. Functionally, catalyzes the GTP-dependent ribosomal translocation step during translation elongation. During this step, the ribosome changes from the pre-translocational (PRE) to the post-translocational (POST) state as the newly formed A-site-bound peptidyl-tRNA and P-site-bound deacylated tRNA move to the P and E sites, respectively. Catalyzes the coordinated movement of the two tRNA molecules, the mRNA and conformational changes in the ribosome. The polypeptide is Elongation factor G (Xylella fastidiosa (strain 9a5c)).